The primary structure comprises 366 residues: 3-dehydroquinate synthase (366 aa).

NAD(+) is bound by residues 75–80 (DGEQYK), 109–113 (GVIGD), 133–134 (TT), lysine 146, lysine 155, and 173–176 (CLST). 3 residues coordinate Zn(2+): glutamate 188, histidine 251, and histidine 268.

This sequence belongs to the sugar phosphate cyclases superfamily. Dehydroquinate synthase family. Co(2+) is required as a cofactor. It depends on Zn(2+) as a cofactor. NAD(+) serves as cofactor.

Its subcellular location is the cytoplasm. It catalyses the reaction 7-phospho-2-dehydro-3-deoxy-D-arabino-heptonate = 3-dehydroquinate + phosphate. It participates in metabolic intermediate biosynthesis; chorismate biosynthesis; chorismate from D-erythrose 4-phosphate and phosphoenolpyruvate: step 2/7. Its function is as follows. Catalyzes the conversion of 3-deoxy-D-arabino-heptulosonate 7-phosphate (DAHP) to dehydroquinate (DHQ). This chain is 3-dehydroquinate synthase, found in Vibrio campbellii (strain ATCC BAA-1116).